Reading from the N-terminus, the 128-residue chain is ATP synthase epsilon chain (128 aa).

The disordered stretch occupies residues 98-128; it reads EALDMPSSTPEQAQIKDAAVRRARGQLRASR. A compositionally biased stretch (basic residues) spans 118-128; the sequence is RRARGQLRASR.

It belongs to the ATPase epsilon chain family. F-type ATPases have 2 components, CF(1) - the catalytic core - and CF(0) - the membrane proton channel. CF(1) has five subunits: alpha(3), beta(3), gamma(1), delta(1), epsilon(1). CF(0) has three main subunits: a, b and c.

Its subcellular location is the cell inner membrane. Produces ATP from ADP in the presence of a proton gradient across the membrane. This chain is ATP synthase epsilon chain, found in Rhodopirellula baltica (strain DSM 10527 / NCIMB 13988 / SH1).